The primary structure comprises 493 residues: MHTLVFLSTRQVLQCQSAACQALPLLPRELFPLLFKVAFMDKKTVVLRELVHTWPFPLLSFQQLLQECAHCSRALLQERPSTESMQAVILGLTARLHTPETEPGTQPLCRKHTLRVLDMTGLLDDGVEQDPGTMSMWDCTAAVARTCIEQQQGRTAEPGQAPVPVEVRVDLRVNRASYAFLREALRSSVGSPLRLCCRDLRAEDLPMRNTVALLQLLDAGCLRRVDLRFNNLGLRGLSVIIPHVARFQHLASLRLHYVHGDSRQPSVDGEDNFRYFLAQMGRFTCLRELSMGSSLLSGRLDQLLSTLQSPLESLELAFCALLPEDLRFLARSSHAVHLKKLDLSGNDLSGSQLEPFQGLLQAAAATLLHLELTECQLADTQLLATLPVLTRCASLRYLGLYGNPLSVAGLRELLRDSVVQAELRTVVHPFPVDCYEGLPWPPPASVLLEASINEEKFARVEAELHQLLLASGRAHVLWTTDIYGRLAADYFSL.

An LRR 1; degenerate repeat occupies 111-146 (KHTLRVLDMTGLLDDGVEQDPGTMSMWDCTAAVART). The LRR 2; degenerate repeat unit spans residues 194-218 (RLCCRDLRAEDLPMRNTVALLQLLD). One copy of the LRR 3; degenerate repeat lies at 219-246 (AGCLRRVDLRFNNLGLRGLSVIIPHVAR). An LRR 4; degenerate repeat occupies 247-282 (FQHLASLRLHYVHGDSRQPSVDGEDNFRYFLAQMGR). LRR repeat units follow at residues 283–307 (FTCLRELSMGSSLLSGRLDQLLSTL), 308–339 (QSPLESLELAFCALLPEDLRFLARSSHAVHLK), 340–360 (KLDLSGNDLSGSQLEPFQGLL), 364–391 (AATLLHLELTECQLADTQLLATLPVLTR), and 392–416 (CASLRYLGLYGNPLSVAGLRELLRD).

The protein belongs to the PRAME family. LRRC14 subfamily. In terms of assembly, interacts with IKBKB; disrupts IKBKB-IKBKG interaction preventing I-kappa-B-kinase (IKK) core complex formation and leading to a decrease of IKBKB phosphorylation and NF-kappaB activation. Interacts with CHUK.

The protein resides in the cytoplasm. Negatively regulates Toll-like receptor-mediated NF-kappa-B signaling by disrupting IKK core complex formation through interaction with IKBKB. The sequence is that of Leucine-rich repeat-containing protein 14 from Bos taurus (Bovine).